The sequence spans 170 residues: MPRSRINGNFIDKTFSIVANILLQIIPTTSGEKRAFTYYRDGMLAQSEGNYAEALQNYYEAMRLEIDPYDRSYILYNIGLIHTSNGEHTKALEYYFRALERNPFLPQAFNNMAVICHYRGEQAILQGDSEIAEAWFDQAAEYWKQAIALTPGNYIEAQNWLKITKRFEFE.

TPR repeat units lie at residues 35 to 68 (AFTYYRDGMLAQSEGNYAEALQNYYEAMRLEIDP), 72 to 105 (SYILYNIGLIHTSNGEHTKALEYYFRALERNPFL), and 120 to 153 (GEQAILQGDSEIAEAWFDQAAEYWKQAIALTPGN).

Belongs to the Ycf3 family.

It localises to the plastid. The protein localises to the chloroplast thylakoid membrane. In terms of biological role, essential for the assembly of the photosystem I (PSI) complex. May act as a chaperone-like factor to guide the assembly of the PSI subunits. This Zea mays (Maize) protein is Photosystem I assembly protein Ycf3.